The following is a 560-amino-acid chain: Vesicular glutamate transporter 1 (560 aa).

Topologically, residues 1 to 63 are cytoplasmic; it reads MEFRQEEFRK…CTCFGLPRRY (63 aa). Residues 64–84 form a helical membrane-spanning segment; the sequence is IIAIMSGLGFCISFGIRCNLG. Over 85–116 the chain is Extracellular; it reads VAIVSMVNNSTTHRGGHVVMQKAQFNWDPETV. Residues 117 to 137 traverse the membrane as a helical segment; sequence GLIHGSFFWGYIVTQIPGGFI. The Cytoplasmic portion of the chain corresponds to 138-140; it reads CQK. A helical transmembrane segment spans residues 141 to 161; that stretch reads FAANRVFGFAIVATSTLNMLI. The Extracellular segment spans residues 162–169; it reads PSAARVHY. The chain crosses the membrane as a helical span at residues 170–190; it reads GCVIFVRILQGLVEGVTYPAC. Topologically, residues 191–208 are cytoplasmic; the sequence is HGIWSKWAPPLERSRLAT. A helical membrane pass occupies residues 209-229; the sequence is TAFCGSYAGAVVAMPLAGVLV. Residues 230-236 lie on the Extracellular side of the membrane; it reads QYSGWSS. The chain crosses the membrane as a helical span at residues 237-257; sequence VFYVYGSFGIFWYLFWLLVSY. At 258–302 the chain is on the cytoplasmic side; sequence ESPALHPSISEEERKYIEDAIGESAKLMNPVTKFNTPWRRFFTSM. A helical membrane pass occupies residues 303–323; sequence PVYAIIVANFCRSWTFYLLLI. Topologically, residues 324–341 are extracellular; the sequence is SQPAYFEEVFGFEISKVG. A helical membrane pass occupies residues 342–362; sequence LVSALPHLVMTIIVPIGGQIA. Over 363–378 the chain is Cytoplasmic; the sequence is DFLRSRRIMSTTNVRK. The chain crosses the membrane as a helical span at residues 379–399; that stretch reads LMNCGGFGMEATLLLVVGYSH. Over 400–401 the chain is Extracellular; that stretch reads SK. The helical transmembrane segment at 402–422 threads the bilayer; it reads GVAISFLVLAVGFSGFAISGF. The Cytoplasmic portion of the chain corresponds to 423-435; it reads NVNHLDIAPRYAS. A helical membrane pass occupies residues 436–456; sequence ILMGISNGVGTLSGMVCPIIV. Residues 457–469 lie on the Extracellular side of the membrane; sequence GAMTKHKTREEWQ. Residues 470–490 form a helical membrane-spanning segment; that stretch reads YVFLIASLVHYGGVIFYGVFA. Residues 491 to 560 are Cytoplasmic-facing; sequence SGEKQPWAEP…PRPPPPVRDY (70 aa). The tract at residues 497–560 is disordered; it reads WAEPEEMSEE…PRPPPPVRDY (64 aa). At Ser-504 the chain carries Phosphoserine. Positions 520–529 are enriched in acidic residues; sequence DESEMEDEAE. Composition is skewed to pro residues over residues 531-540 and 550-560; these read PGAPPAPPPS and PPRPPPPVRDY.

The protein belongs to the major facilitator superfamily. Sodium/anion cotransporter family. VGLUT subfamily. Interacts with SHANK3.

The protein localises to the cytoplasmic vesicle. It localises to the secretory vesicle. The protein resides in the synaptic vesicle membrane. Its subcellular location is the cell membrane. It is found in the synapse. The protein localises to the synaptosome. It carries out the reaction L-glutamate(out) = L-glutamate(in). The catalysed reaction is chloride(in) = chloride(out). The enzyme catalyses 3 Na(+)(out) + phosphate(out) = 3 Na(+)(in) + phosphate(in). It catalyses the reaction phosphate(in) = phosphate(out). It carries out the reaction K(+)(in) + H(+)(out) = K(+)(out) + H(+)(in). With respect to regulation, chloride channel activity is allosterically activated by lumenal H(+) and Cl(-) leading to synaptic vesicles acidification. The L-glutamate transport activity is allosterically activated by lumenal H(+) and Cl(-). The allosteric activation by H(+) efficiently prevents non-vesicular efflux across the plasma membrane, thereby restricting L-glutamate transport activity to acidic membranes such as synaptic vesicles. Multifunctional transporter that transports L-glutamate as well as multiple ions such as chloride, proton, potassium, sodium and phosphate. At the synaptic vesicle membrane, mainly functions as an uniporter which transports preferentially L-glutamate but also phosphate from the cytoplasm into synaptic vesicles at presynaptic nerve terminals of excitatory neural cells. The L-glutamate or phosphate uniporter activity is electrogenic and is driven by the proton electrochemical gradient, mainly by the electrical gradient established by the vacuolar H(+)-ATPase across the synaptic vesicle membrane. In addition, functions as a chloride channel that allows a chloride permeation through the synaptic vesicle membrane that affects the proton electrochemical gradient and promotes synaptic vesicles acidification. Moreover, may function as a K(+)/H(+) antiport allowing to maintain the electrical gradient and to decrease chemical gradient and therefore sustain vesicular glutamate uptake. The vesicular K(+)/H(+) antiport activity is electroneutral. At the plasma membrane, following exocytosis, functions as a symporter of Na(+) and phosphate from the extracellular space to the cytoplasm allowing synaptic phosphate homeostasis regulation. The symporter activity is driven by an inside negative membrane potential and is electrogenic. Is necessary for synaptic signaling of visual-evoked responses from photoreceptors. This Bos taurus (Bovine) protein is Vesicular glutamate transporter 1.